The chain runs to 107 residues: U1-lycotoxin-Ls1b (107 aa).

Positions 1 to 20 (MMKVLVVVALLVTLISYSSS) are cleaved as a signal peptide. A propeptide spanning residues 21-41 (EGIDDLEADELLSLMANEQTR) is cleaved from the precursor. Intrachain disulfides connect C44–C59, C51–C68, C58–C86, and C70–C84.

It belongs to the neurotoxin 19 (CSTX) family. 04 (U1-Lctx) subfamily. As to expression, expressed by the venom gland.

It localises to the secreted. In Lycosa singoriensis (Wolf spider), this protein is U1-lycotoxin-Ls1b.